A 328-amino-acid polypeptide reads, in one-letter code: Cytochrome f (328 aa).

The N-terminal stretch at 1–44 is a signal peptide; that stretch reads MRTFNFLSFPQVHRQALVKAVLVAIATVSLLLTSDVINPQSAQA. Tyr45, Cys66, Cys69, and His70 together coordinate heme. A helical transmembrane segment spans residues 294 to 314; that stretch reads IKGLVLFLGGIMLCQILLVIK.

Belongs to the cytochrome f family. As to quaternary structure, the 4 large subunits of the cytochrome b6-f complex are cytochrome b6, subunit IV (17 kDa polypeptide, PetD), cytochrome f and the Rieske protein, while the 4 small subunits are PetG, PetL, PetM and PetN. The complex functions as a dimer. Requires heme as cofactor.

The protein resides in the cellular thylakoid membrane. Component of the cytochrome b6-f complex, which mediates electron transfer between photosystem II (PSII) and photosystem I (PSI), cyclic electron flow around PSI, and state transitions. The protein is Cytochrome f of Microcystis aeruginosa (strain NIES-843 / IAM M-2473).